The chain runs to 278 residues: MLADIRYWENDATNKHYAIAHFNVWNAEMLMGVIDAAEEAKSPVIISFGTGFVGNTSFEDFSHMMVSMAQKATVPVITHWDHGRSMEIIHNAWTHGMNSLMRDASAFDFEENIRLTKEAVDFFHPLGIPVEAELGHVGNETVYEEALAGYHYTDPDQAAEFVERTGCDSLAVAIGNQHGVYTSEPQLNFEVVKRVRDAVSVPLVLHGASGISDADIKTAISLGIAKINIHTELCQAAMVAVKENQDQPFLHLEREVRKAVKERALEKIKLFGSDGKAE.

This is an uncharacterized protein from Escherichia coli (strain K12).